The primary structure comprises 222 residues: Homing endonuclease I-ApeI (222 aa).

Probably functions as a monomer. It depends on Mg(2+) as a cofactor. Requires Mn(2+) as cofactor.

Its function is as follows. Endonuclease involved in 16S rRNA intron I-alpha homing. Recognizes the minimal target 5'-GCAAGGCTGAAACTTAAAGG-3'; generates 4 base 3' protruding ends 5'-AAAC-3' and 5'-GTTT-3'. In Aeropyrum pernix (strain ATCC 700893 / DSM 11879 / JCM 9820 / NBRC 100138 / K1), this protein is Homing endonuclease I-ApeI (apeI).